We begin with the raw amino-acid sequence, 142 residues long: HTH-type transcriptional regulator MntR (142 aa).

In terms of domain architecture, HTH dtxR-type spans 1–63; sequence MPTPSMEDYI…YEKYRGLILT (63 aa). Positions 8, 11, 77, 99, 102, and 103 each coordinate Mn(2+).

The protein belongs to the DtxR/MntR family. In terms of assembly, homodimer.

The protein localises to the cytoplasm. DNA binding is strongly activated by Mn(2+). In terms of biological role, central regulator of manganese homeostasis. This chain is HTH-type transcriptional regulator MntR, found in Listeria monocytogenes serotype 4b (strain F2365).